A 353-amino-acid polypeptide reads, in one-letter code: Ribosomal RNA small subunit methyltransferase C (353 aa).

This sequence belongs to the methyltransferase superfamily. RsmC family. In terms of assembly, monomer.

It localises to the cytoplasm. The catalysed reaction is guanosine(1207) in 16S rRNA + S-adenosyl-L-methionine = N(2)-methylguanosine(1207) in 16S rRNA + S-adenosyl-L-homocysteine + H(+). Its function is as follows. Specifically methylates the guanine in position 1207 of 16S rRNA in the 30S particle. In Marinomonas sp. (strain MWYL1), this protein is Ribosomal RNA small subunit methyltransferase C.